The chain runs to 318 residues: uncharacterized protein (318 aa).

A coiled-coil region spans residues 67–157 (LAFDELEKEK…SLKAIQTSQE (91 aa)). Residues 172–318 (ESTNKVEKNA…KGFFARLFNL (147 aa)) are disordered. Basic and acidic residues-rich tracts occupy residues 175–193 (NKVE…KDSK) and 219–236 (KVDK…EKAS). Positions 237–248 (VEQSKNGNAAET) are enriched in polar residues. Composition is skewed to basic and acidic residues over residues 249 to 274 (SNKE…HAEA) and 300 to 310 (SEPKPQEEKKG).

This is an uncharacterized protein from Staphylococcus aureus (strain MW2).